Reading from the N-terminus, the 483-residue chain is MTKKTQDLTSWYDQLLVKAKLICHGEVKGTVCFLNNSWGLWMEIQQLYNDAIANKNQLSAIALTKFQPTTSFCYQVFQVQLPTLSFYSEYQKEKTHIKGFNPELFLINQVGQKQLNDPLVLRPTSEIAFCNLWKKQELSYHDLPLIYNQWTQVFRAEKNTRPFLRNSEFYWQETHGLFVDQSQSEQAAISFWNLYQDLIINKLCIPAFVGLKSESEKFAGAKNTWTIEAIMPDGQSLQCATSHDLGDTFTKSFTISYQSKTNQKMTPSSFSCGMSTRILGAIFLTHSDDYGLVLPWYLASKQVKLYLFDKNNNPKTRALAFLVKDFLEKLKIRFSFIEINNQLGKQLLKGEIEGIPLQMIVDNEKTINIFNRLTRLKTSLTFANLQTEFVNLVNNYHTEMYRKANDLVEQKLARVQTLKEIEQAFKNKKAVLCTVKLTGELEQHLKTKYQVSVRCVFKKSDVTQNCPFTNQPCFDSVLIARAY.

It belongs to the class-II aminoacyl-tRNA synthetase family. ProS type 3 subfamily. In terms of assembly, homodimer.

Its subcellular location is the cytoplasm. It carries out the reaction tRNA(Pro) + L-proline + ATP = L-prolyl-tRNA(Pro) + AMP + diphosphate. Its function is as follows. Catalyzes the attachment of proline to tRNA(Pro) in a two-step reaction: proline is first activated by ATP to form Pro-AMP and then transferred to the acceptor end of tRNA(Pro). In Mycoplasma genitalium (strain ATCC 33530 / DSM 19775 / NCTC 10195 / G37) (Mycoplasmoides genitalium), this protein is Proline--tRNA ligase.